The following is a 267-amino-acid chain: Farnesyl diphosphate phosphatase YisP (267 aa).

The protein belongs to the phytoene/squalene synthase family. As to quaternary structure, monomer.

The catalysed reaction is (2E,6E)-farnesyl diphosphate + H2O = (2E,6E)-farnesol + diphosphate. Diphosphate release from FPP is inhibited by zaragozic acid. In terms of biological role, a farnesyl diphosphate (FPP) phosphatase. Involved in biofilm formation, its disruption blocks biofilm synthesis which is restored by exogenous farnesol. Releases diphosphate from FPP, was initally suggested to be a squalene synthase. Diphosphate release is higher from FPP than geranyl pyrophosphate (GPP) or geranylgeranyl pyrophosphate (GGPP). Biofilm synthesis is partially restored by exogenous squalene, beta-carotene or retinol. Required for integrity of cell membrane lipid rafts. Involved in spatial organization of membranes, required for the flotillin-like proteins FloT and FloA to function correctly. The protein is Farnesyl diphosphate phosphatase YisP (yisP) of Bacillus subtilis (strain 168).